The sequence spans 290 residues: MTMNSSIIKNEQAYLDLLRLVLNEGTEKGDRTGTGTLSHFGAQLRFNLADGFPLLTTKKVHLKSITYELLWFLNGSTHVDYLQQNGVRIWNEWATSEQTARFNRPAGDLGPIYGHQWRNYGATTTADGQYNSDGVDQIAQVVEQIKTNPNSRRLIVSGWNPGEADQVALPPCHTLFQFFVADNKLSCQLYQRSADLFLGVPFNIASYAMLTHMVAQVCNLEVGEFIWTGGDCHIYQNHREQVELQLTRSLYTLPTLALNPNVKDIFAFNYEDISVDGYESHPAIKAQVAV.

R31 is a dUMP binding site. Position 61 (H61) interacts with (6R)-5,10-methylene-5,6,7,8-tetrahydrofolate. Residue 152 to 153 (RR) participates in dUMP binding. The Nucleophile role is filled by C172. DUMP-binding positions include 192 to 195 (RSAD), N203, and 233 to 235 (HIY). D195 provides a ligand contact to (6R)-5,10-methylene-5,6,7,8-tetrahydrofolate. Position 289 (A289) interacts with (6R)-5,10-methylene-5,6,7,8-tetrahydrofolate.

Belongs to the thymidylate synthase family. Bacterial-type ThyA subfamily. In terms of assembly, homodimer.

Its subcellular location is the cytoplasm. It carries out the reaction dUMP + (6R)-5,10-methylene-5,6,7,8-tetrahydrofolate = 7,8-dihydrofolate + dTMP. Its pathway is pyrimidine metabolism; dTTP biosynthesis. Catalyzes the reductive methylation of 2'-deoxyuridine-5'-monophosphate (dUMP) to 2'-deoxythymidine-5'-monophosphate (dTMP) while utilizing 5,10-methylenetetrahydrofolate (mTHF) as the methyl donor and reductant in the reaction, yielding dihydrofolate (DHF) as a by-product. This enzymatic reaction provides an intracellular de novo source of dTMP, an essential precursor for DNA biosynthesis. This chain is Thymidylate synthase, found in Psychrobacter cryohalolentis (strain ATCC BAA-1226 / DSM 17306 / VKM B-2378 / K5).